We begin with the raw amino-acid sequence, 173 residues long: Translation initiation factor IF-3 (173 aa).

This sequence belongs to the IF-3 family. As to quaternary structure, monomer.

It is found in the cytoplasm. Its function is as follows. IF-3 binds to the 30S ribosomal subunit and shifts the equilibrium between 70S ribosomes and their 50S and 30S subunits in favor of the free subunits, thus enhancing the availability of 30S subunits on which protein synthesis initiation begins. The sequence is that of Translation initiation factor IF-3 from Methylobacterium radiotolerans (strain ATCC 27329 / DSM 1819 / JCM 2831 / NBRC 15690 / NCIMB 10815 / 0-1).